A 546-amino-acid polypeptide reads, in one-letter code: DDB1- and CUL4-associated factor 11 (546 aa).

The span at 1–19 (MGSRNSSSAGSGSGDPSEG) shows a compositional bias: low complexity. The interval 1 to 40 (MGSRNSSSAGSGSGDPSEGLPRRGAGLRRSEEEEEEDEDV) is disordered. 2 positions are modified to phosphoserine: Leu-49 and Ser-75. 7 WD repeats span residues 170–210 (SYSQ…RKFK), 216–258 (DVGW…TALD), 263–302 (ERRF…RTLQ), 305–345 (SHED…EDDP), 353–392 (GHQD…SREG), 435–480 (GVLH…KKLT), and 481–520 (NHKA…YFQD). A disordered region spans residues 523 to 546 (PESEECASAPAPVPQSSTPFSSPQ). Positions 536–546 (PQSSTPFSSPQ) are enriched in polar residues.

Interacts with DDB1 and CUL4A.

The protein operates within protein modification; protein ubiquitination. Functionally, may function as a substrate receptor for CUL4-DDB1 E3 ubiquitin-protein ligase complex. The chain is DDB1- and CUL4-associated factor 11 (DCAF11) from Homo sapiens (Human).